We begin with the raw amino-acid sequence, 207 residues long: Uracil phosphoribosyltransferase (207 aa).

Residues Arg77, Arg102, and 129 to 137 each bind 5-phospho-alpha-D-ribose 1-diphosphate; that span reads DPMLATGGS. Residues Ile192 and 197–199 each bind uracil; that span reads GDA. 5-phospho-alpha-D-ribose 1-diphosphate is bound at residue Asp198.

The protein belongs to the UPRTase family. It depends on Mg(2+) as a cofactor.

It catalyses the reaction UMP + diphosphate = 5-phospho-alpha-D-ribose 1-diphosphate + uracil. The protein operates within pyrimidine metabolism; UMP biosynthesis via salvage pathway; UMP from uracil: step 1/1. Its activity is regulated as follows. Allosterically activated by GTP. Functionally, catalyzes the conversion of uracil and 5-phospho-alpha-D-ribose 1-diphosphate (PRPP) to UMP and diphosphate. In Ureaplasma urealyticum serovar 10 (strain ATCC 33699 / Western), this protein is Uracil phosphoribosyltransferase.